A 339-amino-acid chain; its full sequence is Phosphoribosylformylglycinamidine cyclo-ligase (339 aa).

This sequence belongs to the AIR synthase family.

The protein resides in the cytoplasm. The catalysed reaction is 2-formamido-N(1)-(5-O-phospho-beta-D-ribosyl)acetamidine + ATP = 5-amino-1-(5-phospho-beta-D-ribosyl)imidazole + ADP + phosphate + H(+). The protein operates within purine metabolism; IMP biosynthesis via de novo pathway; 5-amino-1-(5-phospho-D-ribosyl)imidazole from N(2)-formyl-N(1)-(5-phospho-D-ribosyl)glycinamide: step 2/2. This chain is Phosphoribosylformylglycinamidine cyclo-ligase, found in Oceanobacillus iheyensis (strain DSM 14371 / CIP 107618 / JCM 11309 / KCTC 3954 / HTE831).